The chain runs to 552 residues: Thermosome subunit beta (552 aa).

The tract at residues 531–552 (AGKKGGSEPGGKKEKEEKSSED) is disordered. Positions 540–552 (GGKKEKEEKSSED) are enriched in basic and acidic residues.

Belongs to the TCP-1 chaperonin family. As to quaternary structure, forms a heterooligomeric complex of two stacked nine-membered rings; one of alpha and the other of beta subunits. Sometimes called a 'rosettasome'.

It is found in the cytoplasm. The enzyme catalyses ATP + H2O = ADP + phosphate + H(+). In terms of biological role, molecular chaperone; binds unfolded polypeptides in vitro, stimulates protein folding and has ATPase activity. One of the most abundant proteins in the cell at all temperatures. The polypeptide is Thermosome subunit beta (thsB) (Saccharolobus shibatae (strain ATCC 51178 / DSM 5389 / JCM 8931 / NBRC 15437 / B12) (Sulfolobus shibatae)).